The primary structure comprises 484 residues: MKGSSVPRFVDRVVIHTRAGSGGNGCASVHREKFKPLGGPDGGNGGRGGSIVFVVDPQVHTLLDFHFRPHLTAASGKHGMGNNRDGAAGADLEVKVPEGTVVLDENGRLLADLVGAGTRFEAAAGGRGGLGNAALASRVRKAPGFALLGEKGQSRDLTLELKTVADVGLVGFPSAGKSSLVSAISAAKPKIADYPFTTLVPNLGVVSAGEHAFTVADVPGLIPGASRGRGLGLDFLRHIERCAVLVHVVDCATAEPGRDPISDIDALETELACYTPTLQGDAALGDLAARPRAVVLNKIDVPEARELAEFVRDDIAQRGWPVFCVSTATRENLQPLIFGLSQMISDYNAARPVAVPRRPVIRPIPVDDSGFTVEPDGHGGFVVSGARPERWIDQTNFDNDEAVGYLADRLARLGVEEELLRLGARSGCAVTIGEMTFDWEPQTPAGEPVAMSGRGTDPRLDSNKRVGAAERKAARSRRREHGDG.

Residues 7-164 (PRFVDRVVIH…RDLTLELKTV (158 aa)) form the Obg domain. The interval 21-43 (SGGNGCASVHREKFKPLGGPDGG) is disordered. An OBG-type G domain is found at 165–345 (ADVGLVGFPS…LIFGLSQMIS (181 aa)). Residues 171–178 (GFPSAGKS), 196–200 (FTTLV), 217–220 (DVPG), 297–300 (NKID), and 326–328 (STA) contribute to the GTP site. Residues serine 178 and threonine 198 each coordinate Mg(2+). The OCT domain occupies 363–441 (PIPVDDSGFT…IGEMTFDWEP (79 aa)). Positions 439–484 (WEPQTPAGEPVAMSGRGTDPRLDSNKRVGAAERKAARSRRREHGDG) are disordered. A compositionally biased stretch (basic and acidic residues) spans 456 to 473 (TDPRLDSNKRVGAAERKA). Residues 474-484 (ARSRRREHGDG) are compositionally biased toward basic residues.

It belongs to the TRAFAC class OBG-HflX-like GTPase superfamily. OBG GTPase family. As to quaternary structure, monomer. It depends on Mg(2+) as a cofactor.

It localises to the cytoplasm. In terms of biological role, an essential GTPase which binds GTP, GDP and possibly (p)ppGpp with moderate affinity, with high nucleotide exchange rates and a fairly low GTP hydrolysis rate. Plays a role in control of the cell cycle, stress response, ribosome biogenesis and in those bacteria that undergo differentiation, in morphogenesis control. This chain is GTPase Obg, found in Mycobacterium tuberculosis (strain CDC 1551 / Oshkosh).